The sequence spans 86 residues: Putative protein adenylyltransferase MJ1215 (86 aa).

The GSX(10)DXD motif motif lies at 35–49 (GSYARGEQKETSDID). Mg(2+) contacts are provided by D47, D49, and D79.

This sequence belongs to the MntA antitoxin family. Probably forms a complex with cognate toxin MJ1216. Mg(2+) serves as cofactor.

It carries out the reaction L-tyrosyl-[protein] + ATP = O-(5'-adenylyl)-L-tyrosyl-[protein] + diphosphate. The enzyme catalyses O-(5'-adenylyl)-L-tyrosyl-[protein] + ATP = O-[5'-(adenylyl-(5'-&gt;3')-adenylyl)]-L-tyrosyl-[protein] + diphosphate. Probable antitoxin component of a putative type VII toxin-antitoxin (TA) system. Neutralizes cognate toxic MJ1216 by di-AMPylation. This is Putative protein adenylyltransferase MJ1215 from Methanocaldococcus jannaschii (strain ATCC 43067 / DSM 2661 / JAL-1 / JCM 10045 / NBRC 100440) (Methanococcus jannaschii).